Reading from the N-terminus, the 380-residue chain is Putative RNA ligase (380 aa).

Functionally, putative RNA ligase. Is able to catalyze the adenylation reaction of ssDNA 3'-terminal phosphate (ssDNA 3'p) to 3'-adenylated DNA (ssDNA 3'pp5'A). In Thermovibrio ammonificans (strain DSM 15698 / JCM 12110 / HB-1), this protein is Putative RNA ligase.